The following is a 233-amino-acid chain: 7-cyano-7-deazaguanine synthase (233 aa).

18-28 (FSGGQDSTTCL) lines the ATP pocket. 4 residues coordinate Zn(2+): Cys198, Cys213, Cys216, and Cys219.

It belongs to the QueC family. Zn(2+) is required as a cofactor.

The catalysed reaction is 7-carboxy-7-deazaguanine + NH4(+) + ATP = 7-cyano-7-deazaguanine + ADP + phosphate + H2O + H(+). It functions in the pathway purine metabolism; 7-cyano-7-deazaguanine biosynthesis. Its function is as follows. Catalyzes the ATP-dependent conversion of 7-carboxy-7-deazaguanine (CDG) to 7-cyano-7-deazaguanine (preQ(0)). The protein is 7-cyano-7-deazaguanine synthase of Wolinella succinogenes (strain ATCC 29543 / DSM 1740 / CCUG 13145 / JCM 31913 / LMG 7466 / NCTC 11488 / FDC 602W) (Vibrio succinogenes).